We begin with the raw amino-acid sequence, 612 residues long: Lipoma-preferred partner (612 aa).

Disordered regions lie at residues 1-118 (MSHP…SSLD) and 132-219 (ECSS…SSRP). The segment covering 26-40 (THSFGNPSISVSTQQ) has biased composition (polar residues). The segment covering 41–53 (PPKKFAPVVAPKP) has biased composition (low complexity). Residue Lys108 is modified to N6-acetyllysine. Ser116 and Ser151 each carry phosphoserine. Polar residues-rich tracts occupy residues 143–158 (QSST…STPV) and 171–181 (PLTATKKSTLK). Residues 183-193 (QPAPQAGPIPV) are compositionally biased toward pro residues. A compositionally biased stretch (polar residues) spans 209-219 (SYTTASTSSRP). Residues Tyr244 and Tyr301 each carry the phosphotyrosine modification. The disordered stretch occupies residues 307-387 (YGGRNDSDPT…LGPSSVAPSF (81 aa)). The span at 314–323 (DPTYGQQGHP) shows a compositional bias: polar residues. A Glycyl lysine isopeptide (Lys-Gly) (interchain with G-Cter in SUMO1) cross-link involves residue Lys327. Thr333 bears the Phosphothreonine mark. Position 375 is a phosphoserine (Ser375). LIM zinc-binding domains lie at 414 to 473 (GRCA…INTL), 474 to 534 (EQCN…KFAP), and 535 to 603 (RCSV…RIRV).

It belongs to the zyxin/ajuba family. In terms of assembly, interacts with VASP, with PDZ domains of SCRIB and with ACTN1/alpha-actinin. As to expression, expressed in a wide variety of tissues but no or very low expression in brain and peripheral leukocytes.

It is found in the nucleus. The protein localises to the cytoplasm. The protein resides in the cell junction. Its subcellular location is the cell membrane. Its function is as follows. May play a structural role at sites of cell adhesion in maintaining cell shape and motility. In addition to these structural functions, it may also be implicated in signaling events and activation of gene transcription. May be involved in signal transduction from cell adhesion sites to the nucleus allowing successful integration of signals arising from soluble factors and cell-cell adhesion sites. Also suggested to serve as a scaffold protein upon which distinct protein complexes are assembled in the cytoplasm and in the nucleus. This chain is Lipoma-preferred partner (LPP), found in Homo sapiens (Human).